The sequence spans 579 residues: uncharacterized protein (579 aa).

The protein belongs to the UbiD family.

This is an uncharacterized protein from Chlamydia trachomatis serovar D (strain ATCC VR-885 / DSM 19411 / UW-3/Cx).